We begin with the raw amino-acid sequence, 370 residues long: Phosphate acyltransferase (370 aa).

Positions 349 to 370 are disordered; it reads SAGRAGQDAPDEMAAPGRSEKR.

This sequence belongs to the PlsX family. As to quaternary structure, homodimer. Probably interacts with PlsY.

Its subcellular location is the cytoplasm. The catalysed reaction is a fatty acyl-[ACP] + phosphate = an acyl phosphate + holo-[ACP]. It participates in lipid metabolism; phospholipid metabolism. Catalyzes the reversible formation of acyl-phosphate (acyl-PO(4)) from acyl-[acyl-carrier-protein] (acyl-ACP). This enzyme utilizes acyl-ACP as fatty acyl donor, but not acyl-CoA. The chain is Phosphate acyltransferase from Cereibacter sphaeroides (strain ATCC 17023 / DSM 158 / JCM 6121 / CCUG 31486 / LMG 2827 / NBRC 12203 / NCIMB 8253 / ATH 2.4.1.) (Rhodobacter sphaeroides).